A 417-amino-acid chain; its full sequence is NADH-quinone oxidoreductase subunit D (417 aa).

The protein belongs to the complex I 49 kDa subunit family. As to quaternary structure, NDH-1 is composed of 14 different subunits. Subunits NuoB, C, D, E, F, and G constitute the peripheral sector of the complex.

It localises to the cell membrane. It carries out the reaction a quinone + NADH + 5 H(+)(in) = a quinol + NAD(+) + 4 H(+)(out). Its function is as follows. NDH-1 shuttles electrons from NADH, via FMN and iron-sulfur (Fe-S) centers, to quinones in the respiratory chain. The immediate electron acceptor for the enzyme in this species is believed to be ubiquinone. Couples the redox reaction to proton translocation (for every two electrons transferred, four hydrogen ions are translocated across the cytoplasmic membrane), and thus conserves the redox energy in a proton gradient. This chain is NADH-quinone oxidoreductase subunit D, found in Polynucleobacter asymbioticus (strain DSM 18221 / CIP 109841 / QLW-P1DMWA-1) (Polynucleobacter necessarius subsp. asymbioticus).